Consider the following 73-residue polypeptide: Large ribosomal subunit protein uL29 (73 aa).

The segment at 1–20 (MYKAKDLRDQSLEELEATHD) is disordered.

This sequence belongs to the universal ribosomal protein uL29 family.

In Protochlamydia amoebophila (strain UWE25), this protein is Large ribosomal subunit protein uL29.